Here is a 220-residue protein sequence, read N- to C-terminus: Glutathione S-transferase (220 aa).

In terms of domain architecture, GST N-terminal spans 1–77; the sequence is MLKLHGFSVS…YIEQTQSGKA (77 aa). Glutathione contacts are provided by residues tyrosine 12, valine 49, and 61-62; that span reads ET. Residues 82-211 enclose the GST C-terminal domain; it reads DPFEQAKVRE…ADKEASMPAF (130 aa).

The protein belongs to the GST superfamily. In terms of assembly, monomer and homodimer.

The protein localises to the cytoplasm. The enzyme catalyses RX + glutathione = an S-substituted glutathione + a halide anion + H(+). Its function is as follows. Conjugation of reduced glutathione to a wide number of exogenous and endogenous hydrophobic electrophiles. This is Glutathione S-transferase from Pseudomonas putida (strain ATCC 700007 / DSM 6899 / JCM 31910 / BCRC 17059 / LMG 24140 / F1).